The sequence spans 128 residues: uncharacterized protein (128 aa).

An N-terminal signal peptide occupies residues 1–24 (MKMTKLTTLLLTATLGLASGAALA). Low complexity-rich tracts occupy residues 24 to 44 (AAES…NAGQ) and 52 to 70 (NVAP…GNTN). The disordered stretch occupies residues 24–128 (AAESNAQSSN…VNTKTDGTTQ (105 aa)). Polar residues predominate over residues 71-82 (STMQHPDGSTMN). Positions 85 to 110 (GMTKDEEHKNTMCKDGRCPDINKKVE) are enriched in basic and acidic residues. Positions 113–128 (NGVNNDVNTKTDGTTQ) are enriched in polar residues.

This is an uncharacterized protein from Salmonella typhi.